Consider the following 113-residue polypeptide: Crustacean hyperglycemic hormones B (113 aa).

The N-terminal stretch at 1–26 (MVAFRMMSMALLVVVASSWWASPVEA) is a signal peptide. Disulfide bonds link Cys46–Cys82, Cys62–Cys78, and Cys65–Cys91. Val111 is subject to Valine amide.

This sequence belongs to the arthropod CHH/MIH/GIH/VIH hormone family. In terms of tissue distribution, expressed at a constant level in the eyestalks of juveniles and mature females. A low level expression is seen in the central nervous system.

It is found in the secreted. In terms of biological role, hormone found in the sinus gland of isopods and decapods which controls the blood sugar level. Has a secretagogue action over the amylase released from the midgut gland. May act as a stress hormone and may be involved in the control of molting and reproduction. The polypeptide is Crustacean hyperglycemic hormones B (Metapenaeus ensis (Greasyback shrimp)).